The chain runs to 365 residues: 2-aminoethylphosphonate--pyruvate transaminase (365 aa).

Residue K194 is modified to N6-(pyridoxal phosphate)lysine.

This sequence belongs to the class-V pyridoxal-phosphate-dependent aminotransferase family. PhnW subfamily. In terms of assembly, homodimer. Pyridoxal 5'-phosphate is required as a cofactor.

It carries out the reaction (2-aminoethyl)phosphonate + pyruvate = phosphonoacetaldehyde + L-alanine. Its function is as follows. Involved in phosphonate degradation. This Bacillus cereus (strain AH187) protein is 2-aminoethylphosphonate--pyruvate transaminase.